A 944-amino-acid chain; its full sequence is snRNA-activating protein complex subunit 4 homolog (944 aa).

The interval methionine 1–aspartate 22 is disordered. The segment covering alanine 11–aspartate 22 has biased composition (polar residues). The region spanning threonine 177 to leucine 244 is the Myb-like 1 domain. Positions asparagine 245–serine 301 constitute an HTH myb-type 1 domain. The segment at residues tryptophan 273–valine 297 is a DNA-binding region (H-T-H motif). In terms of domain architecture, Myb-like 2 spans tryptophan 304–leucine 350. HTH myb-type domains lie at aspartate 351–alanine 406 and histidine 407–leucine 459. 2 consecutive DNA-binding regions (H-T-H motif) follow at residues tryptophan 379–leucine 402 and tryptophan 432–isoleucine 455. A compositionally biased stretch (low complexity) spans alanine 911–alanine 921. Residues alanine 911–serine 935 form a disordered region. Over residues glycine 922–serine 935 the composition is skewed to polar residues.

Broadly expressed in all tissues, including head, vulva and tail.

Its subcellular location is the nucleus. Functionally, binds to the promoter regions of RNA polymerase II and III small-nuclear RNA genes, type 3 RNA polymerase III non-coding RNA genes, small nucleolar RNAs and transfer RNA genes. Required for expression of mature 21U-RNAs. The chain is snRNA-activating protein complex subunit 4 homolog from Caenorhabditis elegans.